Reading from the N-terminus, the 163-residue chain is Nucleotide-binding protein RBAM_011030 (163 aa).

The protein belongs to the YajQ family.

Its function is as follows. Nucleotide-binding protein. This chain is Nucleotide-binding protein RBAM_011030, found in Bacillus velezensis (strain DSM 23117 / BGSC 10A6 / LMG 26770 / FZB42) (Bacillus amyloliquefaciens subsp. plantarum).